Consider the following 348-residue polypeptide: Selenide, water dikinase (348 aa).

C17 is a catalytic residue. ATP-binding positions include K20 and 47–49 (THD). Residue D50 coordinates Mg(2+). ATP-binding positions include D67, D90, and 138-140 (GHT). D90 provides a ligand contact to Mg(2+). A Mg(2+)-binding site is contributed by D226.

The protein belongs to the selenophosphate synthase 1 family. Class I subfamily. Homodimer. The cofactor is Mg(2+).

It carries out the reaction hydrogenselenide + ATP + H2O = selenophosphate + AMP + phosphate + 2 H(+). Its function is as follows. Synthesizes selenophosphate from selenide and ATP. This Porphyromonas gingivalis (strain ATCC 33277 / DSM 20709 / CIP 103683 / JCM 12257 / NCTC 11834 / 2561) protein is Selenide, water dikinase.